Consider the following 501-residue polypeptide: MAPALRWLLLWVGSGMLPAQGTHLGIRLPLRSGLAGPPLGLRLPRETDEEPEEPGRRGSFVEMVDNLRGKSGQGYYVEMTVGSPPQTLNILVDTGSSNFAVGAAPHPFLHRYYQRQLSSTYRDLRKSVYVPYTQGKWEGELGTDLVSIPHGPNVTVRANIAAITESDKFFINGSNWEGILGLAYAEIARPDDSLEPFFDSLVKQTHIPNIFSLQLCGAGFPLNQTEALASVGGSMIIGGIDHSLYTGSLWYTPIRREWYYEVIIVRVEINGQDLKMDCKEYNYDKSIVDSGTTNLRLPKKVFEAAVKSIKAASSTEKFPDGFWLGEQLVCWQAGTTPWNIFPVISLYLMGEVTNQSFRITILPQQYLRPVEDVATSQDDCYKFAVSQSSTGTVMGAVIMEGFYVVFDRARKRIGFAVSACHVHDEFRTAAVEGPFVTADMEDCGYNIPQTDESTLMTIAYVMAAICALFMLPLCLMVCQWRCLRCLRHQHDDFADDISLLK.

An N-terminal signal peptide occupies residues 1-21 (MAPALRWLLLWVGSGMLPAQG). The propeptide occupies 22–45 (THLGIRLPLRSGLAGPPLGLRLPR). The Extracellular segment spans residues 22-457 (THLGIRLPLR…PQTDESTLMT (436 aa)). The Peptidase A1 domain occupies 75 to 416 (YYVEMTVGSP…DRARKRIGFA (342 aa)). The active site involves Asp93. Lys126 is subject to N6-acetyllysine. N-linked (GlcNAc...) asparagine glycans are attached at residues Asn153, Asn172, and Asn223. Disulfide bonds link Cys216–Cys420, Cys278–Cys443, and Cys330–Cys380. N6-acetyllysine is present on residues Lys275, Lys279, and Lys285. Residue Asp289 is part of the active site. Lys299, Lys300, and Lys307 each carry N6-acetyllysine. An N-linked (GlcNAc...) asparagine glycan is attached at Asn354. The chain crosses the membrane as a helical span at residues 458-478 (IAYVMAAICALFMLPLCLMVC). Residues Cys474, Cys478, Cys482, and Cys485 are each lipidated (S-palmitoyl cysteine). The Cytoplasmic segment spans residues 479–501 (QWRCLRCLRHQHDDFADDISLLK). Positions 479 to 501 (QWRCLRCLRHQHDDFADDISLLK) are interaction with RTN3. The short motif at 496-500 (DISLL) is the DXXLL element. Position 498 is a phosphoserine (Ser498). Residue Lys501 forms a Glycyl lysine isopeptide (Lys-Gly) (interchain with G-Cter in ubiquitin) linkage.

It belongs to the peptidase A1 family. Monomer. Interacts (via DXXLL motif) with GGA1, GGA2 and GGA3 (via their VHS domain); the interaction highly increases when BACE1 is phosphorylated at Ser-498. Interacts with RTN1; RTN2; RTN3 and RTN4; the interaction leads to inhibition of amyloid precursor protein processing. Interacts with SNX6. Interacts with PCSK9. Interacts with NAT8 and NAT8B. Interacts with BIN1. Interacts (via extracellular domain) with ADAM10 (via extracellular domain). Interacts with SORL1; this interaction may affect binding with APP and hence reduce APP cleavage. Interacts with NRDC AND NRG1. Palmitoylation mediates lipid raft localization. In terms of processing, acetylated in the endoplasmic reticulum at Lys-126, Lys-275, Lys-279, Lys-285, Lys-299, Lys-300 and Lys-307. Acetylation by NAT8 and NAT8B is transient and deacetylation probably occurs in the Golgi. Acetylation regulates the maturation, the transport to the plasma membrane, the stability and the expression of the protein. Post-translationally, ubiquitinated at Lys-501, ubiquitination leads to lysosomal degradation. Monoubiquitinated and 'Lys-63'-linked polyubitinated. Deubiquitnated by USP8; inhibits lysosomal degradation. Phosphorylation at Ser-498 is required for interaction with GGA1 and retrograded transport from endosomal compartments to the trans-Golgi network. Non-phosphorylated BACE1 enters a direct recycling route to the cell surface. In terms of processing, N-Glycosylated. Addition of a bisecting N-acetylglucosamine by MGAT3 blocks lysosomal targeting, further degradation and is required for maintaining stability under stress conditions.

It localises to the cell membrane. It is found in the golgi apparatus. Its subcellular location is the trans-Golgi network. The protein localises to the endoplasmic reticulum. The protein resides in the endosome. It localises to the cell surface. It is found in the cytoplasmic vesicle membrane. Its subcellular location is the membrane raft. The protein localises to the lysosome. The protein resides in the late endosome. It localises to the early endosome. It is found in the recycling endosome. Its subcellular location is the cell projection. The protein localises to the axon. The protein resides in the dendrite. It catalyses the reaction Broad endopeptidase specificity. Cleaves Glu-Val-Asn-Leu-|-Asp-Ala-Glu-Phe in the Swedish variant of Alzheimer's amyloid precursor protein.. Inhibited by RTN3 and RTN4. Its function is as follows. Responsible for the proteolytic processing of the amyloid precursor protein (APP). Cleaves at the N-terminus of the A-beta peptide sequence, between residues 671 and 672 of APP, leads to the generation and extracellular release of beta-cleaved soluble APP, and a corresponding cell-associated C-terminal fragment which is later released by gamma-secretase. Cleaves CHL1. This chain is Beta-secretase 1 (Bace1), found in Rattus norvegicus (Rat).